The primary structure comprises 198 residues: HTH-type transcriptional regulator BetI (198 aa).

Residues 8–68 (PLRRRELIDA…ATMRHLLREL (61 aa)) enclose the HTH tetR-type domain. The segment at residues 31–50 (TVAQIAHEAGVSPALAHHYF) is a DNA-binding region (H-T-H motif).

The protein operates within amine and polyamine biosynthesis; betaine biosynthesis via choline pathway [regulation]. Functionally, repressor involved in the biosynthesis of the osmoprotectant glycine betaine. It represses transcription of the choline transporter BetT and the genes of BetAB involved in the synthesis of glycine betaine. The sequence is that of HTH-type transcriptional regulator BetI from Brucella abortus (strain 2308).